We begin with the raw amino-acid sequence, 109 residues long: MKPYSTLFLFTLLTLTTVPAQADIIDDTIGNIQQAINDAYNPDHGRDYEDSRDDGWQREVSDDRRRQYDDRRRQFEDRRRQLDDRQHQLDQERRQLEDEERRMEDEYGQ.

Residues 1-22 (MKPYSTLFLFTLLTLTTVPAQA) form the signal peptide. The segment at 39-109 (AYNPDHGRDY…ERRMEDEYGQ (71 aa)) is disordered. The segment covering 41 to 109 (NPDHGRDYED…ERRMEDEYGQ (69 aa)) has biased composition (basic and acidic residues).

This is an uncharacterized protein from Shigella dysenteriae serotype 1 (strain Sd197).